The sequence spans 1076 residues: Cytadherence high molecular weight protein 3 (1076 aa).

The fibronectin-binding stretch occupies residues 264-284 (QGYDQGYDQQYDQQGYDQQGY). Residues 326-335 (QQPVEVAKPA) are compositionally biased toward low complexity. Residues 326–351 (QQPVEVAKPAPTKPVGPKPQPGKKAT) are disordered. Pro residues predominate over residues 336–345 (PTKPVGPKPQ). The stretch at 562–616 (EITKLEELVEIKTDNTESLNKLETLIDENKKIIDQFKQLKEEAKKSNSNINLEKV) forms a coiled coil. Disordered stretches follow at residues 789-808 (SREHEQVQPKAQHQQPTTRI) and 850-873 (RINPQDSYYDQGYEQPDPYQEQQP). Polar residues predominate over residues 797–806 (PKAQHQQPTT). Residues 862–873 (YEQPDPYQEQQP) show a composition bias toward low complexity.

It localises to the cell projection. The protein resides in the attachment organelle membrane. Binds immobilized fibronectin. In terms of biological role, component of the cytoskeleton-like structure which stabilizes the shape of the wall-less mycoplasma. This cytoskeleton-like network of accessory proteins containing HMW proteins 1 to 5 allows the proper anchoring of cytadhesin proteins in the mycoplasmal membrane at the attachment organelle. Essential for successful surface parasitism. The chain is Cytadherence high molecular weight protein 3 (hlp3) from Mycoplasmoides gallisepticum (strain R(low / passage 15 / clone 2)) (Mycoplasma gallisepticum).